Consider the following 122-residue polypeptide: Large ribosomal subunit protein uL14 (122 aa).

The protein belongs to the universal ribosomal protein uL14 family. As to quaternary structure, part of the 50S ribosomal subunit. Forms a cluster with proteins L3 and L19. In the 70S ribosome, L14 and L19 interact and together make contacts with the 16S rRNA in bridges B5 and B8.

Functionally, binds to 23S rRNA. Forms part of two intersubunit bridges in the 70S ribosome. This Shewanella woodyi (strain ATCC 51908 / MS32) protein is Large ribosomal subunit protein uL14.